The chain runs to 966 residues: Protein mes-1 (966 aa).

A signal peptide spans 1 to 19 (MKIHHFLTLLCTFLPLTTT). Over 20–470 (ALTNSTPLSL…QASDIPTSVE (451 aa)) the chain is Extracellular. N-linked (GlcNAc...) asparagine glycans are attached at residues N62, N126, N183, N214, N251, and N372. The chain crosses the membrane as a helical span at residues 471–491 (LMAVVLATSAIFALIALFLLY). The Cytoplasmic segment spans residues 492–966 (RKRKRDKKAR…FKSVNVAATV (475 aa)). The Protein kinase domain occupies 656–966 (HNFNERIEKQ…FKSVNVAATV (311 aa)). ATP-binding positions include 662 to 670 (IEKQAYWLM) and K685.

The protein belongs to the protein kinase superfamily.

It is found in the cell membrane. Functionally, during early embryogenesis, controls asymmetric cell division and the asymmetric localization of P granules of germline precursor P2 and its descendant P3. Probably upstream of tyrosine kinase src-1, plays a role in endoderm development by controlling spindle orientation during EMS blastomere cell division. Controls EMS spindle orientation probably by promoting lin-5 and gpr-1/2 enrichment at, and let-99 exclusion from the junction between P2 and EMS cells. The polypeptide is Protein mes-1 (Caenorhabditis elegans).